A 60-amino-acid chain; its full sequence is Large ribosomal subunit protein uL30 (60 aa).

This sequence belongs to the universal ribosomal protein uL30 family. As to quaternary structure, part of the 50S ribosomal subunit.

In Aromatoleum aromaticum (strain DSM 19018 / LMG 30748 / EbN1) (Azoarcus sp. (strain EbN1)), this protein is Large ribosomal subunit protein uL30.